Consider the following 733-residue polypeptide: Fibronectin type III domain-containing protein 7 (733 aa).

The first 25 residues, 1-25 (MAGGRETCLPLIGFILICLKMVASA), serve as a signal peptide directing secretion. Fibronectin type-III domains lie at 28–115 (APEI…TVLA), 116–202 (APIL…TSPR), 203–288 (APAN…TVAC), 289–373 (APGR…TAPC), 374–459 (CPSD…TAPC), 460–544 (SPEI…TVPC), 545–632 (CPTG…CCPL), and 631–715 (PLGV…YSVT). A glycan (N-linked (GlcNAc...) asparagine) is linked at Asn230. Asn433 carries an N-linked (GlcNAc...) asparagine glycan.

The protein resides in the secreted. The chain is Fibronectin type III domain-containing protein 7 (FNDC7) from Homo sapiens (Human).